The following is a 233-amino-acid chain: LexA repressor (233 aa).

The H-T-H motif DNA-binding region spans 26–46; it reads FDEMKDALDLRSKSGIHRLIT. Active-site for autocatalytic cleavage activity residues include S154 and K192.

The protein belongs to the peptidase S24 family. As to quaternary structure, homodimer.

It carries out the reaction Hydrolysis of Ala-|-Gly bond in repressor LexA.. Its function is as follows. Represses a number of genes involved in the response to DNA damage (SOS response), including recA and lexA. In the presence of single-stranded DNA, RecA interacts with LexA causing an autocatalytic cleavage which disrupts the DNA-binding part of LexA, leading to derepression of the SOS regulon and eventually DNA repair. The protein is LexA repressor of Nitrobacter winogradskyi (strain ATCC 25391 / DSM 10237 / CIP 104748 / NCIMB 11846 / Nb-255).